We begin with the raw amino-acid sequence, 151 residues long: NAD(P)H-quinone oxidoreductase subunit N (151 aa).

The protein belongs to the complex I NdhN subunit family. As to quaternary structure, NDH-1 can be composed of about 15 different subunits; different subcomplexes with different compositions have been identified which probably have different functions.

It is found in the cellular thylakoid membrane. The catalysed reaction is a plastoquinone + NADH + (n+1) H(+)(in) = a plastoquinol + NAD(+) + n H(+)(out). The enzyme catalyses a plastoquinone + NADPH + (n+1) H(+)(in) = a plastoquinol + NADP(+) + n H(+)(out). Its function is as follows. NDH-1 shuttles electrons from an unknown electron donor, via FMN and iron-sulfur (Fe-S) centers, to quinones in the respiratory and/or the photosynthetic chain. The immediate electron acceptor for the enzyme in this species is believed to be plastoquinone. Couples the redox reaction to proton translocation, and thus conserves the redox energy in a proton gradient. Cyanobacterial NDH-1 also plays a role in inorganic carbon-concentration. The sequence is that of NAD(P)H-quinone oxidoreductase subunit N from Acaryochloris marina (strain MBIC 11017).